The sequence spans 1169 residues: MRPIISDYIQNDKRFQELDDVFGHQNILVTGLSPSAKATIIAEKYLKDQKQMLLITNNLYQADKLETDILQYIDHSEVYKYPVQDIMTEEFSTQSPQLMSERVRTLTALAHNKKGLFIVPLNGLKKWLTPFELWKDHQITLRVGEDIDVDEFLNKLVNMGYRRESVVSHIGEFSLRGGIIDIYPLIGQPVRIELFDTEVDSIRDFDVETQRSNDNIEEVSITTASDYVITDDVIQHLQSELKTAYEATRPKIDKSVRNDLKETYESFKLFETTFFDHQLLRRLVAFMYEQPSTLIDYFAKDAIIVADEYNRIKETEKTLTTEVDDFIQNLIESGNGFIGQSFMQYDGFESLLKDYPVTYFTLFTSTMPVQLQHIIKFSCKPVQQFYGQYDIMRSEFQRYVHNDYHIVVLVETETKVERIQSMLNEMHIPTVTNVQNDIKSGQVVVTEGSLSEGFELPYMQLVVITERELFKTKQKKQRKRTKTLSNAEKIKSYQDLNVGDYVVHVHHGVGRYLGVETLEVGDVHRDYIKLQYKGTDQLFVPVDQMDQVQKYVASEDKSPKLNKLGGSEWKKTKAKVQQSVEDIADELIALYKEREMSVGYQYGEDTAEQSAFEMDFPYELTPDQAKSIDEIKGDMERERPMDRLLCGDVGYGKTEVAVRAAFKAVMEGKQVAFLVPTTILAQQHYETLIERMQDFPVQIELISRFRSTKEVKETKEGLKSGYVDIVVGTHKLLGKDIHYKDLGLLIVDEEQRFGVRHKERIKTMKTNVDVLTLTATPIPRTLHMSMLGVRDLSVIETPPENRFPVQTYVLEQNSNFIKEALERELSRDGQVFYLYNRVQSIYEKREQLQMLMPDANIAVAHGQMTERDLEETMLSFINGEFDILVTTTIIETGVDVPNANTLIIEEADRFGLSQLYQLRGRVGRSSRIGYAYFLHSANKVLTETAEERLQAIKEFTELGSGFKIAMRDLNIRGAGNLLGKQQHGFIDSVGFDLYSQMLEEAVNEKRGIKEEEPDAPEVEMELNLDAYLPAEYIQNEQAKIEIYKKLRKVETEEQLFDIKDELIDRFNDYPVEVERLLEMVEIKIHALHAGVTLIKDKGKQIEVSLSTKATEQMNGEELFKQTQPLGRAMKLGVKENRMHVTLTKSKQWLDNLKFLVRCLEGSMVIEDEN.

A Helicase ATP-binding domain is found at 634-795 (DMERERPMDR…MLGVRDLSVI (162 aa)). Residue 647–654 (GDVGYGKT) coordinates ATP. Residues 748–751 (DEEQ) carry the DEEQ box motif. Positions 809-970 (VLEQNSNFIK…GFKIAMRDLN (162 aa)) constitute a Helicase C-terminal domain.

In the N-terminal section; belongs to the UvrB family. It in the C-terminal section; belongs to the helicase family. RecG subfamily.

The protein localises to the cytoplasm. Its function is as follows. Couples transcription and DNA repair by recognizing RNA polymerase (RNAP) stalled at DNA lesions. Mediates ATP-dependent release of RNAP and its truncated transcript from the DNA, and recruitment of nucleotide excision repair machinery to the damaged site. The sequence is that of Transcription-repair-coupling factor from Staphylococcus haemolyticus (strain JCSC1435).